A 31-amino-acid chain; its full sequence is Cyclotide cter-R (31 aa).

Positions 1-31 (GIPCGESCVFIPCTVTALLGCSCKDKVCYKN) form a cross-link, cyclopeptide (Gly-Asn). 3 cysteine pairs are disulfide-bonded: Cys-4–Cys-21, Cys-8–Cys-23, and Cys-13–Cys-28.

In terms of processing, this is a cyclic peptide.

The protein localises to the secreted. Its function is as follows. Probably participates in a plant defense mechanism. The chain is Cyclotide cter-R from Clitoria ternatea (Butterfly pea).